The chain runs to 142 residues: Large ribosomal subunit protein uL13 (142 aa).

Belongs to the universal ribosomal protein uL13 family. As to quaternary structure, part of the 50S ribosomal subunit.

This protein is one of the early assembly proteins of the 50S ribosomal subunit, although it is not seen to bind rRNA by itself. It is important during the early stages of 50S assembly. This is Large ribosomal subunit protein uL13 from Burkholderia mallei (strain NCTC 10247).